A 218-amino-acid chain; its full sequence is Ribosomal RNA small subunit methyltransferase G (218 aa).

Residues Gly-86, Leu-91, 137–138, and Arg-153 each bind S-adenosyl-L-methionine; that span reads AE.

Belongs to the methyltransferase superfamily. RNA methyltransferase RsmG family.

The protein localises to the cytoplasm. The enzyme catalyses guanosine(527) in 16S rRNA + S-adenosyl-L-methionine = N(7)-methylguanosine(527) in 16S rRNA + S-adenosyl-L-homocysteine. Functionally, specifically methylates the N7 position of guanine in position 527 of 16S rRNA. This chain is Ribosomal RNA small subunit methyltransferase G, found in Nitratidesulfovibrio vulgaris (strain ATCC 29579 / DSM 644 / CCUG 34227 / NCIMB 8303 / VKM B-1760 / Hildenborough) (Desulfovibrio vulgaris).